The chain runs to 301 residues: MQASADQVERDILETQKRLQQDRLNSEQSQALQHQQETGSSLKEAEVLLKDLFLDVDKARRLKHPQAEETEKDIEQLHERVTQECAEYCALYEKMVLPPRRGIQGRLGTRAGAETEAGLRRPVWAGHGGAGGTDRGAQHRAEGDQRPRRAAAEPGGAGCRHHPEPIPRPTEGGVVARAEPGQPVHALQGCTWQLSALAEQQRRILQQDWSDLMADPAGVRREYEHFKQHELLSQEQSVNQLEEDGKRMVELRHPAVGPIQAHQEALKMEWQNFLNLCICQETQLQHVEDYSRILCPSSSPH.

Residues 1-88 (MQASADQVER…ERVTQECAEY (88 aa)) adopt a coiled-coil conformation. Disordered stretches follow at residues 18 to 41 (RLQQ…TGSS) and 118 to 166 (GLRR…PEPI). Positions 26 to 41 (SEQSQALQHQQETGSS) are enriched in polar residues. Basic and acidic residues predominate over residues 136 to 151 (GAQHRAEGDQRPRRAA).

It belongs to the plakin or cytolinker family.

In Homo sapiens (Human), this protein is Envoplakin-like protein (EVPLL).